Reading from the N-terminus, the 337-residue chain is 2-oxoglutarate-Fe(II) type oxidoreductase (337 aa).

The region spanning 179 to 282 is the Fe2OG dioxygenase domain; the sequence is AIATLRYLHY…RYSIPFFFTG (104 aa). Residues His-205, Asp-207, and His-263 each contribute to the Fe cation site. Arg-273 contacts 2-oxoglutarate.

It belongs to the iron/ascorbate-dependent oxidoreductase family. Fe(2+) is required as a cofactor. In terms of tissue distribution, endocrocin is specifically produced in conidia.

The protein operates within secondary metabolite biosynthesis. Its function is as follows. 2-oxoglutarate-Fe(II) type oxidoreductase; part of the gene cluster that mediates the biosynthesis of endocrocin, a simple anthraquinone interesting for many biotechnological applications. The pathway begins with the synthesis of atrochrysone thioester by the polyketide synthase (PKS) encA. The atrochrysone carboxyl ACP thioesterase encB then breaks the thioester bond and releases the atrochrysone carboxylic acid from encA. The atrochrysone carboxylic acid is then converted to endocrocin anthrone which is further oxidized into endocrocin by encC. The exact function of encD has not been identified yet, but it negatively regulates endocrocin production, likely through the modification of endocrocin itself. The sequence is that of 2-oxoglutarate-Fe(II) type oxidoreductase from Aspergillus fumigatus (strain ATCC MYA-4609 / CBS 101355 / FGSC A1100 / Af293) (Neosartorya fumigata).